Reading from the N-terminus, the 187-residue chain is Peptide deformylase 1 (187 aa).

Positions 107 and 149 each coordinate Fe cation. Glutamate 150 is an active-site residue. Histidine 153 lines the Fe cation pocket.

The protein belongs to the polypeptide deformylase family. The cofactor is Fe(2+).

The catalysed reaction is N-terminal N-formyl-L-methionyl-[peptide] + H2O = N-terminal L-methionyl-[peptide] + formate. Functionally, removes the formyl group from the N-terminal Met of newly synthesized proteins. Requires at least a dipeptide for an efficient rate of reaction. N-terminal L-methionine is a prerequisite for activity but the enzyme has broad specificity at other positions. This chain is Peptide deformylase 1, found in Nostoc sp. (strain PCC 7120 / SAG 25.82 / UTEX 2576).